Consider the following 565-residue polypeptide: NAD-dependent malic enzyme (565 aa).

Y104 (proton donor) is an active-site residue. R157 contacts NAD(+). Catalysis depends on K175, which acts as the Proton acceptor. 3 residues coordinate a divalent metal cation: E246, D247, and D270. NAD(+) contacts are provided by D270 and N418.

Belongs to the malic enzymes family. In terms of assembly, homotetramer. Mg(2+) serves as cofactor. Requires Mn(2+) as cofactor.

It catalyses the reaction (S)-malate + NAD(+) = pyruvate + CO2 + NADH. It carries out the reaction oxaloacetate + H(+) = pyruvate + CO2. The protein is NAD-dependent malic enzyme of Pectobacterium atrosepticum (strain SCRI 1043 / ATCC BAA-672) (Erwinia carotovora subsp. atroseptica).